The sequence spans 473 residues: tRNA-2-methylthio-N(6)-dimethylallyladenosine synthase (473 aa).

In terms of domain architecture, MTTase N-terminal spans 5–125 (RKLHIKSYGC…LPQLLARAKA (121 aa)). Residues cysteine 14, cysteine 50, cysteine 88, cysteine 166, cysteine 170, and cysteine 173 each contribute to the [4Fe-4S] cluster site. Residues 152–384 (RARGISAFVT…QNLIDSQQSA (233 aa)) form the Radical SAM core domain. The TRAM domain maps to 387–449 (RAAVGTTVDV…RYSLLGSLAS (63 aa)). Positions 453-462 (SRASADDAPP) are enriched in low complexity. Positions 453 to 473 (SRASADDAPPVGASSPAIMGV) are disordered.

The protein belongs to the methylthiotransferase family. MiaB subfamily. Monomer. [4Fe-4S] cluster is required as a cofactor.

It is found in the cytoplasm. The enzyme catalyses N(6)-dimethylallyladenosine(37) in tRNA + (sulfur carrier)-SH + AH2 + 2 S-adenosyl-L-methionine = 2-methylsulfanyl-N(6)-dimethylallyladenosine(37) in tRNA + (sulfur carrier)-H + 5'-deoxyadenosine + L-methionine + A + S-adenosyl-L-homocysteine + 2 H(+). Its function is as follows. Catalyzes the methylthiolation of N6-(dimethylallyl)adenosine (i(6)A), leading to the formation of 2-methylthio-N6-(dimethylallyl)adenosine (ms(2)i(6)A) at position 37 in tRNAs that read codons beginning with uridine. This is tRNA-2-methylthio-N(6)-dimethylallyladenosine synthase from Nitrobacter hamburgensis (strain DSM 10229 / NCIMB 13809 / X14).